Reading from the N-terminus, the 353-residue chain is Photosystem II protein D1 (353 aa).

Thr2 is modified (N-acetylthreonine). Position 2 is a phosphothreonine (Thr2). Helical transmembrane passes span 29 to 46, 118 to 133, and 142 to 156; these read YIGWFGVLMIPTLLTATS, HFFLGICSYMGREWEL, and WIAVAYSAPVAAATA. His118 lines the chlorophyll a pocket. A pheophytin a-binding site is contributed by Tyr126. Positions 170 and 189 each coordinate [CaMn4O5] cluster. A helical membrane pass occupies residues 197 to 218; sequence FHMLGVAGVFGGSLFSAMHGSL. His198 lines the chlorophyll a pocket. A quinone-binding positions include His215 and 264–265; that span reads SF. His215 is a binding site for Fe cation. His272 lines the Fe cation pocket. The chain crosses the membrane as a helical span at residues 274–288; it reads FLAAWPVVGIWFTAL. 4 residues coordinate [CaMn4O5] cluster: His332, Glu333, Asp342, and Ala344. The propeptide occupies 345 to 353; sequence VVEAPAVNG.

The protein belongs to the reaction center PufL/M/PsbA/D family. PSII is composed of 1 copy each of membrane proteins PsbA, PsbB, PsbC, PsbD, PsbE, PsbF, PsbH, PsbI, PsbJ, PsbK, PsbL, PsbM, PsbT, PsbX, PsbY, PsbZ, Psb30/Ycf12, at least 3 peripheral proteins of the oxygen-evolving complex and a large number of cofactors. It forms dimeric complexes. The cofactor is The D1/D2 heterodimer binds P680, chlorophylls that are the primary electron donor of PSII, and subsequent electron acceptors. It shares a non-heme iron and each subunit binds pheophytin, quinone, additional chlorophylls, carotenoids and lipids. D1 provides most of the ligands for the Mn4-Ca-O5 cluster of the oxygen-evolving complex (OEC). There is also a Cl(-1) ion associated with D1 and D2, which is required for oxygen evolution. The PSII complex binds additional chlorophylls, carotenoids and specific lipids.. Post-translationally, tyr-161 forms a radical intermediate that is referred to as redox-active TyrZ, YZ or Y-Z. In terms of processing, C-terminally processed by CTPA; processing is essential to allow assembly of the oxygen-evolving complex and thus photosynthetic growth.

Its subcellular location is the plastid. The protein localises to the chloroplast thylakoid membrane. The enzyme catalyses 2 a plastoquinone + 4 hnu + 2 H2O = 2 a plastoquinol + O2. Photosystem II (PSII) is a light-driven water:plastoquinone oxidoreductase that uses light energy to abstract electrons from H(2)O, generating O(2) and a proton gradient subsequently used for ATP formation. It consists of a core antenna complex that captures photons, and an electron transfer chain that converts photonic excitation into a charge separation. The D1/D2 (PsbA/PsbD) reaction center heterodimer binds P680, the primary electron donor of PSII as well as several subsequent electron acceptors. The polypeptide is Photosystem II protein D1 (Chlorella vulgaris (Green alga)).